The chain runs to 532 residues: Probable G-protein coupled receptor Mth-like 11 (532 aa).

The signal sequence occupies residues 1 to 20 (MGMFRVEYLLLGILVIGVRS). Residues 21 to 229 (RDIPNCDFFD…VRKSRLSNAS (209 aa)) are Extracellular-facing. Intrachain disulfides connect Cys-26/Cys-80, Cys-82/Cys-87, Cys-91/Cys-184, Cys-92/Cys-103, and Cys-145/Cys-204. A glycan (N-linked (GlcNAc...) asparagine) is linked at Asn-42. 5 N-linked (GlcNAc...) asparagine glycosylation sites follow: Asn-110, Asn-123, Asn-166, Asn-195, and Asn-227. A helical transmembrane segment spans residues 230–250 (IPVKFSSVFFMVITIAAYLWL). Residues 251-262 (PKFRSLHGKCCN) are Cytoplasmic-facing. Residues 263-283 (LYFICLAITFLLNVISLFGIF) form a helical membrane-spanning segment. The Extracellular segment spans residues 284–290 (ELKTPIC). The helical transmembrane segment at 291-311 (YLTGYAGYFTVMATFLWLSVI) threads the bilayer. At 312–339 (SFDVWRRFAMRKFQVFYKNKRSSFFNYN) the chain is on the cytoplasmic side. A helical transmembrane segment spans residues 340-360 (IIVWSSAGLLTCIIFLVDQFV). Topologically, residues 361–386 (ETNLDNPYNPAVGVFSCWIFTNGWSA) are extracellular. Residues 387 to 407 (TFYFYAPLAILIILNCASFFL) form a helical membrane-spanning segment. The Cytoplasmic segment spans residues 408–439 (TTRYIYVENKQNQKVLNNSEPQKLSRNHANYR). A helical membrane pass occupies residues 440–460 (IYFRLFIIMGGSWFLEIIAFI). Residues 461–469 (CEMENMWKP) lie on the Extracellular side of the membrane. A helical transmembrane segment spans residues 470 to 490 (LIILNDYINCSQGIIIFVATF). Residues 491–532 (CNHEMFRLIRKRIQNRNITSLELTNTSRPVESEKMADVELGK) lie on the Cytoplasmic side of the membrane.

This sequence belongs to the G-protein coupled receptor 2 family. Mth subfamily.

Its subcellular location is the cell membrane. The sequence is that of Probable G-protein coupled receptor Mth-like 11 (mthl11) from Drosophila melanogaster (Fruit fly).